We begin with the raw amino-acid sequence, 1126 residues long: Protein translocase subunit SecA (1126 aa).

ATP-binding positions include Gln175, Gly193 to Thr197, and Asp694. The interval Val1060–Leu1126 is disordered. The span at Ala1064 to Asp1080 shows a compositional bias: basic and acidic residues. Cys1110, Cys1112, Cys1121, and His1122 together coordinate Zn(2+).

This sequence belongs to the SecA family. Monomer and homodimer. Part of the essential Sec protein translocation apparatus which comprises SecA, SecYEG and auxiliary proteins SecDF. Other proteins may also be involved. It depends on Zn(2+) as a cofactor.

Its subcellular location is the cell inner membrane. The protein localises to the cytoplasm. It catalyses the reaction ATP + H2O + cellular proteinSide 1 = ADP + phosphate + cellular proteinSide 2.. Functionally, part of the Sec protein translocase complex. Interacts with the SecYEG preprotein conducting channel. Has a central role in coupling the hydrolysis of ATP to the transfer of proteins into and across the cell membrane, serving as an ATP-driven molecular motor driving the stepwise translocation of polypeptide chains across the membrane. The polypeptide is Protein translocase subunit SecA (Parabacteroides distasonis (strain ATCC 8503 / DSM 20701 / CIP 104284 / JCM 5825 / NCTC 11152)).